The primary structure comprises 452 residues: MGDSGDAQKMQRLLEMLALNSGDMSKLTQQQRKAFEEYKFWKTQPVARFDEKVEEEGPINPPRRVEDVRDEPYPLLEEFEWRTMDITTGQDLEDVFVLLNENYIEDKDSTFRFNYTREFFNWALKPPGWRKEWHVGVRVRQSGRLVAFISAVPTTLEVRGREMKSVEINFLCIHKKLRSKRLAPILIKEITRRVNKCDIWHALYSAGIVLPSPISTCRYTHRPLNWSKLFDVGFTALPANATKTQMLAKYTLPKKPLVEGLRPMTDADVDGAFDLFNRYQKRFELIQTFDKSEFRHWFLGNEETPSVIYSYVVQNSEGKITDFVSFYSLPFTILKNPLHKELGIGYLFYYASDADFDYEDRYDPTATELLRKRLTQLINDVCILARDLKMDVFNALTSQDNALFLEDLKFGPGDGFLNFYLFNYRANPIRGGLTEDKKFDAKNRSNQGVVML.

Tetradecanoyl-CoA-binding positions include 38–41 (YKFW), 171–173 (LCI), and 179–183 (SKRLA). Residue Leu452 is the Proton acceptor; via carboxylate of the active site.

The protein belongs to the NMT family. As to quaternary structure, monomer.

The protein resides in the cytoplasm. It carries out the reaction N-terminal glycyl-[protein] + tetradecanoyl-CoA = N-tetradecanoylglycyl-[protein] + CoA + H(+). In terms of biological role, adds a myristoyl group to the N-terminal glycine residue of certain cellular proteins. This chain is Glycylpeptide N-tetradecanoyltransferase (NMT1), found in Eremothecium gossypii (strain ATCC 10895 / CBS 109.51 / FGSC 9923 / NRRL Y-1056) (Yeast).